A 198-amino-acid chain; its full sequence is Probable thymidylate kinase (198 aa).

9 to 16 (GIDGSGKT) is an ATP binding site.

The protein belongs to the thymidylate kinase family.

The enzyme catalyses dTMP + ATP = dTDP + ADP. The chain is Probable thymidylate kinase from Methanococcus vannielii (strain ATCC 35089 / DSM 1224 / JCM 13029 / OCM 148 / SB).